The following is a 365-amino-acid chain: Eukaryotic translation initiation factor 3 subunit H (365 aa).

The 150-residue stretch at 11–160 folds into the MPN domain; the sequence is VQVEALVVMK…LRAFRLSPQF (150 aa). The stretch at 273–303 forms a coiled coil; it reads YQRSLAREQTKIAAWQAKRKAENATRAQLKQ.

The protein belongs to the eIF-3 subunit H family. Component of the eukaryotic translation initiation factor 3 (eIF-3) complex.

Its subcellular location is the cytoplasm. Its function is as follows. Component of the eukaryotic translation initiation factor 3 (eIF-3) complex, which is involved in protein synthesis of a specialized repertoire of mRNAs and, together with other initiation factors, stimulates binding of mRNA and methionyl-tRNAi to the 40S ribosome. The eIF-3 complex specifically targets and initiates translation of a subset of mRNAs involved in cell proliferation. The chain is Eukaryotic translation initiation factor 3 subunit H from Coccidioides immitis (strain RS) (Valley fever fungus).